Reading from the N-terminus, the 87-residue chain is U3-theraphotoxin-Hhn1a 10 (87 aa).

The N-terminal stretch at 1-24 (MVNMEASMFLTFAGLVLLFVVCYA) is a signal peptide. The propeptide occupies 25–52 (SESEEKEFPKEMLSSIFAVDNDFKQEER). 3 cysteine pairs are disulfide-bonded: cysteine 54–cysteine 67, cysteine 61–cysteine 72, and cysteine 66–cysteine 79.

It belongs to the neurotoxin 10 (Hwtx-1) family. 51 (Hntx-8) subfamily. Hntx-8 sub-subfamily. In terms of tissue distribution, expressed by the venom gland.

It is found in the secreted. Functionally, ion channel inhibitor. In Cyriopagopus hainanus (Chinese bird spider), this protein is U3-theraphotoxin-Hhn1a 10.